The following is a 185-amino-acid chain: MISVNDFKTGVTIELEGQAFQVVEFMHVKPGKGSAFVRAKLKNVKTGGTVEKTFRGGEKVPRAHLDKREMQYLYNDGEGYVCMDTENYEQISISKESIGEGAKWLMENMILGVLFFQGNIIGVDLPNFVEMLVVDTEPGVKGDTATGAVKNATLESGAVVQVPLFVNTGDRLRIDIRTGEYMERV.

It belongs to the elongation factor P family.

Its subcellular location is the cytoplasm. The protein operates within protein biosynthesis; polypeptide chain elongation. Its function is as follows. Involved in peptide bond synthesis. Stimulates efficient translation and peptide-bond synthesis on native or reconstituted 70S ribosomes in vitro. Probably functions indirectly by altering the affinity of the ribosome for aminoacyl-tRNA, thus increasing their reactivity as acceptors for peptidyl transferase. This Syntrophomonas wolfei subsp. wolfei (strain DSM 2245B / Goettingen) protein is Elongation factor P.